The chain runs to 138 residues: Acidic phospholipase A2 inhibitor chain HPD-1I (138 aa).

Positions 1–16 (MRTLWIVAVCLIGVEG) are cleaved as a signal peptide. 7 disulfide bridges follow: Cys-42–Cys-131, Cys-44–Cys-60, Cys-59–Cys-111, Cys-65–Cys-138, Cys-66–Cys-104, Cys-73–Cys-97, and Cys-91–Cys-102.

In terms of assembly, heterodimer of an acidic and a basic chain; non-covalently linked. The basic chain is toxic and has phospholipase A2 activity (chain HDP-1P (AC Q1RP79) or HDP-2P (AC Q1RP78)) and the acidic chain is non-toxic and functions as its inhibitor (chain HPD-1I). As to expression, expressed by the venom gland.

It localises to the secreted. Heterodimer: slightly affects neuromuscular transmission acting presynaptically. It has a low catalytic activity, a low anticoagulant activity and weakly inhibits ADP-induced platelet aggregation. In terms of biological role, monomer: has no activity (neurotoxic, catalytic, anticoagulant and a ADP-induced platelet aggregation), but inhibits phospholipase A2. The sequence is that of Acidic phospholipase A2 inhibitor chain HPD-1I from Vipera nikolskii (Nikolsky's adder).